Reading from the N-terminus, the 317-residue chain is Melanocyte-stimulating hormone receptor (317 aa).

Topologically, residues 1-37 (MPVQGSQRRLLGSLNSTPTATPHLGLAANQTGARCLE) are extracellular. N29 is a glycosylation site (N-linked (GlcNAc...) asparagine). Residues 38–63 (VSIPDGLFLSLGLVSLVENVLVVTAI) form a helical membrane-spanning segment. The Cytoplasmic portion of the chain corresponds to 64-72 (AKNRNLHSP). Residues 73–93 (MYCFICCLALSDLLVSGSNML) form a helical membrane-spanning segment. The Extracellular segment spans residues 94–118 (ETAVILLLEAGALAARAAVVQQLDN). A helical transmembrane segment spans residues 119–140 (VIDVITCSSMLSSLCFLGAIAV). Residues 141-163 (DRYISIFYALRYHSIVTLPRARR) lie on the Cytoplasmic side of the membrane. The helical transmembrane segment at 164-183 (AVAAIWVASVLFSMLFIAYY) threads the bilayer. Over 184-191 (DHAAVLLC) the chain is Extracellular. Residues 192-211 (LVVFFLAMLVLMAVLYVHML) traverse the membrane as a helical segment. The Cytoplasmic segment spans residues 212-240 (ARACQHAQGIARLHKRQRPAHQSFGLKGA). The chain crosses the membrane as a helical span at residues 241–266 (ATLTILLGIFFLCWGPFFLHLTLIVL). The Extracellular portion of the chain corresponds to 267 to 279 (CPQHPTCSCIFKN). The chain crosses the membrane as a helical span at residues 280–300 (FNLFLTLIICNAIIDPLIYAF). The Cytoplasmic segment spans residues 301–317 (RSQELRRTLKEVLLCSW). The S-palmitoyl cysteine moiety is linked to residue C315.

This sequence belongs to the G-protein coupled receptor 1 family. As to quaternary structure, interacts with MGRN1, but does not undergo MGRN1-mediated ubiquitination; this interaction competes with GNAS-binding and thus inhibits agonist-induced cAMP production. Interacts with OPN3; the interaction results in a decrease in MC1R-mediated cAMP signaling and ultimately a decrease in melanin production in melanocytes.

It is found in the cell membrane. Receptor for MSH (alpha, beta and gamma) and ACTH. The activity of this receptor is mediated by G proteins which activate adenylate cyclase. Mediates melanogenesis, the production of eumelanin (black/brown) and phaeomelanin (red/yellow), via regulation of cAMP signaling in melanocytes. The chain is Melanocyte-stimulating hormone receptor (MC1R) from Erythrocebus patas (Red guenon).